The chain runs to 236 residues: Glucosamine-6-phosphate deaminase (236 aa).

Aspartate 62 serves as the catalytic Proton acceptor; for enolization step. Asparagine 128 (for ring-opening step) is an active-site residue. Histidine 130 (proton acceptor; for ring-opening step) is an active-site residue. Glutamate 135 (for ring-opening step) is an active-site residue.

This sequence belongs to the glucosamine/galactosamine-6-phosphate isomerase family. NagB subfamily.

It catalyses the reaction alpha-D-glucosamine 6-phosphate + H2O = beta-D-fructose 6-phosphate + NH4(+). It functions in the pathway amino-sugar metabolism; N-acetylneuraminate degradation; D-fructose 6-phosphate from N-acetylneuraminate: step 5/5. Its function is as follows. Catalyzes the reversible isomerization-deamination of glucosamine 6-phosphate (GlcN6P) to form fructose 6-phosphate (Fru6P) and ammonium ion. The polypeptide is Glucosamine-6-phosphate deaminase (Pediococcus pentosaceus (strain ATCC 25745 / CCUG 21536 / LMG 10740 / 183-1w)).